A 641-amino-acid polypeptide reads, in one-letter code: Methionine--tRNA ligase (641 aa).

Residues 13–23 (YYPSAKLHIGN) carry the 'HIGH' region motif. Zn(2+) contacts are provided by Cys128, Cys131, Cys145, and Cys148. The short motif at 298 to 302 (KMSKS) is the 'KMSKS' region element. ATP is bound at residue Lys301. Positions 539–641 (DFDKIDLRVV…GELPTGSQVR (103 aa)) constitute a tRNA-binding domain.

Belongs to the class-I aminoacyl-tRNA synthetase family. MetG type 2A subfamily. Homodimer. It depends on Zn(2+) as a cofactor.

Its subcellular location is the cytoplasm. It catalyses the reaction tRNA(Met) + L-methionine + ATP = L-methionyl-tRNA(Met) + AMP + diphosphate. Functionally, is required not only for elongation of protein synthesis but also for the initiation of all mRNA translation through initiator tRNA(fMet) aminoacylation. The chain is Methionine--tRNA ligase from Clostridium tetani (strain Massachusetts / E88).